A 660-amino-acid chain; its full sequence is Nuclear factor erythroid 2-related factor 3 (660 aa).

A disordered region spans residues 120–214 (SAVGDGGQSA…KTEEHKMACA (95 aa)). Residues 123–135 (GDGGQSASAGGGD) are compositionally biased toward gly residues. Basic and acidic residues-rich tracts occupy residues 173 to 186 (MLREKSEAVDHSSQ) and 204 to 214 (SKTEEHKMACA). Positions 541–604 (LIRDIRRRGK…DIMRQKLHGL (64 aa)) constitute a bZIP domain. The segment at 543-562 (RDIRRRGKNKVAAQNCRKRK) is basic motif. Residues 566 to 573 (ILNLEDDI) are leucine-zipper.

This sequence belongs to the bZIP family. CNC subfamily. Heterodimer with MAFG, MAFK and other small MAF proteins that binds to the MAF recognition elements (MARE). High level expression in brain, thymus, testis and placenta. Medium level expression in uterus, stomach and lung. Low level expression in kidney. No expression in heart, liver, spleen and ovary.

The protein resides in the nucleus. Functionally, activates erythroid-specific, globin gene expression. This is Nuclear factor erythroid 2-related factor 3 (Nfe2l3) from Mus musculus (Mouse).